The primary structure comprises 164 residues: MADTDDIIDYESDDLTEYEDDEEEEEDGESLETSDIDPKSSYKIVESASTHIEDAHSNLKHIGNHISALKRRYTRRISLFEIAGIIAESYNLLQRGRLPLVSEFSDETMKQNMLHVIIQEIEEGSCPIVIEKNGELLSVNDFDKDGLKFHLDYIIKIWKLQKRY.

A compositionally biased stretch (acidic residues) spans 1–35 (MADTDDIIDYESDDLTEYEDDEEEEEDGESLETSD). The disordered stretch occupies residues 1–39 (MADTDDIIDYESDDLTEYEDDEEEEEDGESLETSDIDPK).

It belongs to the poxviridae DNA-directed RNA polymerase 19 kDa subunit family. The DNA-dependent RNA polymerase used for intermediate and late genes expression consists of eight subunits Rpo30/OPG66, Rpo7/OPG90, Rpo22/OPG103, Rpo147/OPG105, Rpo18/OPG119, Rpo19/OPG131, Rpo132/OPG151 and Rpo35/OPG156. The same holoenzyme, with the addition of the transcription-specificity factor OPG109, is used for early gene expression.

It is found in the virion. The enzyme catalyses RNA(n) + a ribonucleoside 5'-triphosphate = RNA(n+1) + diphosphate. Part of the DNA-dependent RNA polymerase which catalyzes the transcription of viral DNA into RNA using the four ribonucleoside triphosphates as substrates. Responsible for the transcription of early, intermediate and late genes. DNA-dependent RNA polymerase associates with the early transcription factor (ETF), itself composed of OPG118 and OPG133, thereby allowing the early genes transcription. Late transcription, and probably also intermediate transcription, require newly synthesized RNA polymerase. The sequence is that of DNA-directed RNA polymerase 19 kDa subunit (OPG131) from Homo sapiens (Human).